The following is a 324-amino-acid chain: Glycerol-3-phosphate dehydrogenase [NAD(P)+] (324 aa).

4 residues coordinate NADPH: serine 10, phenylalanine 11, arginine 31, and lysine 106. Residues lysine 106, glycine 134, and serine 136 each contribute to the sn-glycerol 3-phosphate site. Alanine 138 lines the NADPH pocket. Sn-glycerol 3-phosphate contacts are provided by lysine 189, aspartate 244, serine 254, arginine 255, and asparagine 256. The active-site Proton acceptor is lysine 189. Arginine 255 lines the NADPH pocket. NADPH is bound by residues isoleucine 279 and glutamate 281.

This sequence belongs to the NAD-dependent glycerol-3-phosphate dehydrogenase family.

The protein localises to the cytoplasm. The catalysed reaction is sn-glycerol 3-phosphate + NAD(+) = dihydroxyacetone phosphate + NADH + H(+). It carries out the reaction sn-glycerol 3-phosphate + NADP(+) = dihydroxyacetone phosphate + NADPH + H(+). The protein operates within membrane lipid metabolism; glycerophospholipid metabolism. Catalyzes the reduction of the glycolytic intermediate dihydroxyacetone phosphate (DHAP) to sn-glycerol 3-phosphate (G3P), the key precursor for phospholipid synthesis. This Ehrlichia canis (strain Jake) protein is Glycerol-3-phosphate dehydrogenase [NAD(P)+].